Here is a 230-residue protein sequence, read N- to C-terminus: Flagellar L-ring protein (230 aa).

Residues 1–18 (MNRLNIAVSCLATALLFG) form the signal peptide. Cysteine 19 carries N-palmitoyl cysteine lipidation. Cysteine 19 is lipidated: S-diacylglycerol cysteine.

Belongs to the FlgH family. In terms of assembly, the basal body constitutes a major portion of the flagellar organelle and consists of four rings (L,P,S, and M) mounted on a central rod.

It is found in the cell outer membrane. It localises to the bacterial flagellum basal body. Its function is as follows. Assembles around the rod to form the L-ring and probably protects the motor/basal body from shearing forces during rotation. The sequence is that of Flagellar L-ring protein from Legionella pneumophila (strain Corby).